A 215-amino-acid polypeptide reads, in one-letter code: 3-isopropylmalate dehydratase small subunit (215 aa).

The protein belongs to the LeuD family. LeuD type 1 subfamily. In terms of assembly, heterodimer of LeuC and LeuD.

It catalyses the reaction (2R,3S)-3-isopropylmalate = (2S)-2-isopropylmalate. It participates in amino-acid biosynthesis; L-leucine biosynthesis; L-leucine from 3-methyl-2-oxobutanoate: step 2/4. Its function is as follows. Catalyzes the isomerization between 2-isopropylmalate and 3-isopropylmalate, via the formation of 2-isopropylmaleate. This chain is 3-isopropylmalate dehydratase small subunit, found in Marinobacter nauticus (strain ATCC 700491 / DSM 11845 / VT8) (Marinobacter aquaeolei).